Reading from the N-terminus, the 750-residue chain is Photosystem I P700 chlorophyll a apoprotein A1 (750 aa).

8 helical membrane passes run 70-93 (VFSA…FHGA), 156-179 (LYST…FHYH), 195-219 (LNHH…HVSL), 291-309 (TVHH…GHMY), 346-369 (WHAQ…HHMY), 385-411 (LSLF…IFMV), 433-455 (AIVS…LYIH), and 531-549 (FLVH…LILL). Positions 573 and 582 each coordinate [4Fe-4S] cluster. 2 consecutive transmembrane segments (helical) span residues 589–610 (HVFL…HFSW) and 664–686 (LSAY…MFLF). Histidine 675 contributes to the chlorophyll a' binding site. Chlorophyll a contacts are provided by methionine 683 and tyrosine 691. Tryptophan 692 provides a ligand contact to phylloquinone. The helical transmembrane segment at 724 to 744 (AVGVAHYLLGGIATTWAFFLA) threads the bilayer.

The protein belongs to the PsaA/PsaB family. In terms of assembly, the PsaA/B heterodimer binds the P700 chlorophyll special pair and subsequent electron acceptors. PSI consists of a core antenna complex that captures photons, and an electron transfer chain that converts photonic excitation into a charge separation. The eukaryotic PSI reaction center is composed of at least 11 subunits. P700 is a chlorophyll a/chlorophyll a' dimer, A0 is one or more chlorophyll a, A1 is one or both phylloquinones and FX is a shared 4Fe-4S iron-sulfur center. serves as cofactor.

Its subcellular location is the plastid. The protein resides in the chloroplast thylakoid membrane. The catalysed reaction is reduced [plastocyanin] + hnu + oxidized [2Fe-2S]-[ferredoxin] = oxidized [plastocyanin] + reduced [2Fe-2S]-[ferredoxin]. In terms of biological role, psaA and PsaB bind P700, the primary electron donor of photosystem I (PSI), as well as the electron acceptors A0, A1 and FX. PSI is a plastocyanin-ferredoxin oxidoreductase, converting photonic excitation into a charge separation, which transfers an electron from the donor P700 chlorophyll pair to the spectroscopically characterized acceptors A0, A1, FX, FA and FB in turn. Oxidized P700 is reduced on the lumenal side of the thylakoid membrane by plastocyanin. The protein is Photosystem I P700 chlorophyll a apoprotein A1 of Huperzia lucidula (Shining clubmoss).